Reading from the N-terminus, the 346-residue chain is Elongation factor Ts (346 aa).

An involved in Mg(2+) ion dislocation from EF-Tu region spans residues 80 to 83; sequence TDFV.

The protein belongs to the EF-Ts family.

It localises to the cytoplasm. Functionally, associates with the EF-Tu.GDP complex and induces the exchange of GDP to GTP. It remains bound to the aminoacyl-tRNA.EF-Tu.GTP complex up to the GTP hydrolysis stage on the ribosome. This Streptococcus pneumoniae serotype 19F (strain G54) protein is Elongation factor Ts.